The primary structure comprises 651 residues: MSGELNGNDTSAQAAVSAGSVLEGAAFADEGEQHNESMKTLVLGALGVVYGDIGTSPIYAFREALHAAATNGILARSDILGVVSLIFWALTLVVTVKYVLFVLRADNNGEGGILSLMALVRAALKGRPDLILGVGICGAALFFGDAVITPAISVLSAMEGLEIVAPNLTPFVVPATVVILVTLFSVQKLGTGRVAIVFGPIMALWFVALGASGLWHIFDDPTVMAALNPYYAVRFLTVSPAVAFVTVGAVFLAMTGAEALYADLGHFGRKPIVRAWLWIVFPCLLLNYFGQAAFILSHGEAAALPFFQMIPSFALWPMVLLATAATVIASQAVITGAYSVARQAVQLNILPRLEIQHTSEKLHGQIYIPRVNLLLGLAVVILVLGFEKSSNLAAAYGIAVTGNMLVTTVLLYIVMTRIWNWRVSRALPIILGFLVIDMLFFSANIIKVHEGGWASIGIATVLVLIMWTWVRGTRHLFQKTRKAEVPLDLIVEQMAKRPPTIVPGTAVFLTGDPKSAPTALMHSLKHYKVLHENNVILTVVTASKPWVASADRARLSQYNERFMLVTLTFGYMQQPNILRALGLCRRLGWKFDIMTTSFFLSRRSLKASVHSGMPLWQDKLFILLARTASDATEYFQIPTGRVVEIGTQVNI.

A run of 12 helical transmembrane segments spans residues 41-61 (LVLG…IYAF), 82-102 (VVSL…VLFV), 130-150 (LILG…VITP), 163-183 (IVAP…LVTL), 194-214 (VAIV…ASGL), 235-255 (FLTV…LAMT), 276-296 (WLWI…AFIL), 309-329 (MIPS…TVIA), 366-386 (IYIP…VLGF), 395-415 (AYGI…YIVM), 426-446 (ALPI…ANII), and 450-470 (EGGW…WTWV).

This sequence belongs to the HAK/KUP transporter (TC 2.A.72) family.

The protein localises to the cell inner membrane. The enzyme catalyses K(+)(in) + H(+)(in) = K(+)(out) + H(+)(out). Its function is as follows. Transport of potassium into the cell. Likely operates as a K(+):H(+) symporter. This chain is Probable potassium transport system protein Kup, found in Brucella suis (strain ATCC 23445 / NCTC 10510).